The primary structure comprises 340 residues: HTH-type transcriptional regulator GalS (340 aa).

In terms of domain architecture, HTH lacI-type spans 1–56 (MITIRDVARQAGVSVATVSRVLNNSALVSPDTRDAVMQAVTLLGYRPNANAQALAT). The segment at residues 4 to 23 (IRDVARQAGVSVATVSRVLN) is a DNA-binding region (H-T-H motif).

In terms of assembly, homodimer.

Repressor of the mgl operon. Binds galactose and D-fucose as inducers. GalS binds to an operator DNA sequence within its own coding sequence. The sequence is that of HTH-type transcriptional regulator GalS (galS) from Salmonella typhimurium (strain LT2 / SGSC1412 / ATCC 700720).